The primary structure comprises 330 residues: Peroxidase N1 (330 aa).

The first 29 residues, 1-29 (MEYYHHSINKMAMFMVILVLAIDVTMVLG), serve as a signal peptide directing secretion. Pyrrolidone carboxylic acid is present on Q30. Intrachain disulfides connect C41–C117, C74–C79, C123–C326, and C201–C233. The active-site Proton acceptor is the H72. Ca(2+) contacts are provided by D73, V76, G78, D80, and S82. P164 contacts substrate. Residue H194 participates in heme b binding. Residue T195 coordinates Ca(2+). An N-linked (GlcNAc...) asparagine glycan is attached at N212. The Ca(2+) site is built by D246 and D254.

Belongs to the peroxidase family. Classical plant (class III) peroxidase subfamily. It depends on Ca(2+) as a cofactor. Requires heme b as cofactor. Expressed at a high level in roots and at a trace level in lower leaves. Not expressed in upper leaves, stems, flowers, seeds and shoot apices.

It is found in the secreted. The catalysed reaction is 2 a phenolic donor + H2O2 = 2 a phenolic radical donor + 2 H2O. Functionally, removal of H(2)O(2), oxidation of toxic reductants, biosynthesis and degradation of lignin, suberization, auxin catabolism, response to environmental stresses such as wounding, pathogen attack and oxidative stress. These functions might be dependent on each isozyme/isoform in each plant tissue. Can use NADH, NADPH and monolignols as substrates. In Nicotiana tabacum (Common tobacco), this protein is Peroxidase N1.